Reading from the N-terminus, the 427-residue chain is Serine--tRNA ligase (427 aa).

231 to 233 contributes to the L-serine binding site; it reads TAE. 262 to 264 lines the ATP pocket; that stretch reads RSE. Glu-285 lines the L-serine pocket. 349–352 contacts ATP; it reads EISS. Ser-385 provides a ligand contact to L-serine.

Belongs to the class-II aminoacyl-tRNA synthetase family. Type-1 seryl-tRNA synthetase subfamily. Homodimer. The tRNA molecule binds across the dimer.

The protein localises to the cytoplasm. The enzyme catalyses tRNA(Ser) + L-serine + ATP = L-seryl-tRNA(Ser) + AMP + diphosphate + H(+). It catalyses the reaction tRNA(Sec) + L-serine + ATP = L-seryl-tRNA(Sec) + AMP + diphosphate + H(+). The protein operates within aminoacyl-tRNA biosynthesis; selenocysteinyl-tRNA(Sec) biosynthesis; L-seryl-tRNA(Sec) from L-serine and tRNA(Sec): step 1/1. Functionally, catalyzes the attachment of serine to tRNA(Ser). Is also able to aminoacylate tRNA(Sec) with serine, to form the misacylated tRNA L-seryl-tRNA(Sec), which will be further converted into selenocysteinyl-tRNA(Sec). This Listeria monocytogenes serotype 4b (strain CLIP80459) protein is Serine--tRNA ligase.